A 41-amino-acid chain; its full sequence is MKVRNSLRSLKSRHRDCQVVRRKGRIYVINKTNPRFKARQG.

Belongs to the bacterial ribosomal protein bL36 family.

This chain is Large ribosomal subunit protein bL36, found in Paracoccus denitrificans (strain Pd 1222).